The sequence spans 309 residues: GTPase Era (309 aa).

The Era-type G domain occupies H16 to E186. Positions G24–S31 are G1. G24–S31 is a GTP binding site. Residues Q50–R54 form a G2 region. The segment at D71–G74 is G3. Residues D71–L75 and N133–D136 contribute to the GTP site. A G4 region spans residues N133–D136. Residues L164–A166 are G5. The 78-residue stretch at L217 to P294 folds into the KH type-2 domain.

The protein belongs to the TRAFAC class TrmE-Era-EngA-EngB-Septin-like GTPase superfamily. Era GTPase family. In terms of assembly, monomer.

It localises to the cytoplasm. The protein resides in the cell membrane. Functionally, an essential GTPase that binds both GDP and GTP, with rapid nucleotide exchange. Plays a role in 16S rRNA processing and 30S ribosomal subunit biogenesis and possibly also in cell cycle regulation and energy metabolism. The protein is GTPase Era of Deinococcus geothermalis (strain DSM 11300 / CIP 105573 / AG-3a).